Here is a 186-residue protein sequence, read N- to C-terminus: ATP synthase subunit delta (186 aa).

Belongs to the ATPase delta chain family. As to quaternary structure, F-type ATPases have 2 components, F(1) - the catalytic core - and F(0) - the membrane proton channel. F(1) has five subunits: alpha(3), beta(3), gamma(1), delta(1), epsilon(1). F(0) has three main subunits: a(1), b(2) and c(10-14). The alpha and beta chains form an alternating ring which encloses part of the gamma chain. F(1) is attached to F(0) by a central stalk formed by the gamma and epsilon chains, while a peripheral stalk is formed by the delta and b chains.

It is found in the cell inner membrane. Its function is as follows. F(1)F(0) ATP synthase produces ATP from ADP in the presence of a proton or sodium gradient. F-type ATPases consist of two structural domains, F(1) containing the extramembraneous catalytic core and F(0) containing the membrane proton channel, linked together by a central stalk and a peripheral stalk. During catalysis, ATP synthesis in the catalytic domain of F(1) is coupled via a rotary mechanism of the central stalk subunits to proton translocation. This protein is part of the stalk that links CF(0) to CF(1). It either transmits conformational changes from CF(0) to CF(1) or is implicated in proton conduction. The protein is ATP synthase subunit delta of Leptospira interrogans serogroup Icterohaemorrhagiae serovar copenhageni (strain Fiocruz L1-130).